The following is a 56-amino-acid chain: MHVIDVDVRLYMSTFIIIDQSTENTSIDTTVTINIIYLAIMKIIMNIIMMIMIELV.

A helical membrane pass occupies residues 33-53 (INIIYLAIMKIIMNIIMMIMI).

It localises to the host membrane. This is an uncharacterized protein from Bos taurus (Bovine).